We begin with the raw amino-acid sequence, 109 residues long: Mitochondrial pyruvate carrier 1 (109 aa).

A2 bears the N-acetylalanine mark. At 2–20 (AGALVRKAADYVRSKDFRD) the chain is on the mitochondrial matrix side. A helical membrane pass occupies residues 21–41 (YLMSTHFWGPVANWGLPIAAI). Residues 42–52 (NDMKKSPEIIS) lie on the Mother cell cytoplasmic side of the membrane. The helical transmembrane segment at 53–71 (GRMTFALCCYSLTFMRFAY) threads the bilayer. Residue K72 is modified to N6-acetyllysine. Residues 72-109 (KVQPRNWLLFACHATNEVAQLIQGGRLIRHEMSKKASA) are Mitochondrial matrix-facing.

In terms of assembly, homodimer. Forms heterodimer with MPC2. The heterodimer is the more stable and dominant form.

It is found in the mitochondrion inner membrane. It catalyses the reaction pyruvate(out) + H(+)(out) = pyruvate(in) + H(+)(in). In terms of biological role, mediates the uptake of pyruvate into mitochondria. The protein is Mitochondrial pyruvate carrier 1 (MPC1) of Bos taurus (Bovine).